The sequence spans 176 residues: MSNTMQGAHYPQMAFDPTWQMHPAYATATAFNPYNVSFDFTRSPNTSGGSDESMSDGSKIDPKRSPKYLEKRMKNNEAAKKSRASRKHREQKNQTENELLKRKNAALEEELKQAKCELAQMQITIRDMSIEREAYRRENEMLKMVNNKFADSKFEPPQPLRDMTNCNLPYKYELLS.

The interval 44–101 (PNTSGGSDESMSDGSKIDPKRSPKYLEKRMKNNEAAKKSRASRKHREQKNQTENELLK) is disordered. Over residues 47-57 (SGGSDESMSDG) the composition is skewed to low complexity. Positions 58-80 (SKIDPKRSPKYLEKRMKNNEAAK) are enriched in basic and acidic residues. The region spanning 65–128 (SPKYLEKRMK…AQMQITIRDM (64 aa)) is the bZIP domain. A basic motif region spans residues 67 to 92 (KYLEKRMKNNEAAKKSRASRKHREQK). The span at 81–90 (KSRASRKHRE) shows a compositional bias: basic residues. A compositionally biased stretch (basic and acidic residues) spans 91–101 (QKNQTENELLK). Positions 100–107 (LKRKNAAL) are leucine-zipper.

This sequence belongs to the bZIP family.

The sequence is that of bZIP transcription factor 8 (zip-8) from Caenorhabditis elegans.